The following is a 134-amino-acid chain: Ribosome-binding factor A (134 aa).

The protein belongs to the RbfA family. As to quaternary structure, monomer. Binds 30S ribosomal subunits, but not 50S ribosomal subunits or 70S ribosomes.

It localises to the cytoplasm. Functionally, one of several proteins that assist in the late maturation steps of the functional core of the 30S ribosomal subunit. Associates with free 30S ribosomal subunits (but not with 30S subunits that are part of 70S ribosomes or polysomes). Required for efficient processing of 16S rRNA. May interact with the 5'-terminal helix region of 16S rRNA. The polypeptide is Ribosome-binding factor A (Tolumonas auensis (strain DSM 9187 / NBRC 110442 / TA 4)).